The sequence spans 142 residues: ATP synthase epsilon chain (142 aa).

The protein belongs to the ATPase epsilon chain family. In terms of assembly, F-type ATPases have 2 components, CF(1) - the catalytic core - and CF(0) - the membrane proton channel. CF(1) has five subunits: alpha(3), beta(3), gamma(1), delta(1), epsilon(1). CF(0) has three main subunits: a, b and c.

It is found in the cell inner membrane. In terms of biological role, produces ATP from ADP in the presence of a proton gradient across the membrane. The protein is ATP synthase epsilon chain of Shewanella baltica (strain OS185).